Here is a 465-residue protein sequence, read N- to C-terminus: Anthocyanidin 3-O-glucosyltransferase 2 (465 aa).

Catalysis depends on His22, which acts as the Proton acceptor. 2 residues coordinate an anthocyanidin: His22 and Gln87. Catalysis depends on Asp122, which acts as the Charge relay. A UDP-alpha-D-glucose-binding site is contributed by Thr145. His154 is an an anthocyanidin binding site. The UDP-alpha-D-glucose site is built by Ala345, Gln347, His362, Trp365, Asn366, Ser367, and Glu370. Gly385 contacts an anthocyanidin. Residues Asp386 and Gln387 each contribute to the UDP-alpha-D-glucose site.

Belongs to the UDP-glycosyltransferase family. Highest expression detected in fruit, with very low levels detected in petal and leaf.

It carries out the reaction an anthocyanidin + UDP-alpha-D-glucose + H(+) = an anthocyanidin 3-O-beta-D-glucoside + UDP. It catalyses the reaction pelargonidin + UDP-alpha-D-glucose = pelargonidin 3-O-beta-D-glucoside + UDP. The catalysed reaction is cyanidin + UDP-alpha-D-glucose = cyanidin 3-O-beta-D-glucoside + UDP + H(+). Its pathway is pigment biosynthesis; anthocyanin biosynthesis. Its function is as follows. In the presence of other necessary color factors, this glycosylation reaction allows the accumulation of anthocyanin pigments. Anthocyanidins are the preferred substrates, while flavonols are only a minor substrate in vitro. In Fragaria ananassa (Strawberry), this protein is Anthocyanidin 3-O-glucosyltransferase 2.